A 23-amino-acid polypeptide reads, in one-letter code: NADP phosphatase 2 (23 aa).

In terms of assembly, homodimer.

The protein resides in the cytoplasm. The sequence is that of NADP phosphatase 2 from Arthrobacter sp. (strain KM).